A 330-amino-acid polypeptide reads, in one-letter code: Elongation factor Ts (330 aa).

Residues 79 to 82 are involved in Mg(2+) ion dislocation from EF-Tu; that stretch reads TDFV.

Belongs to the EF-Ts family.

It localises to the cytoplasm. In terms of biological role, associates with the EF-Tu.GDP complex and induces the exchange of GDP to GTP. It remains bound to the aminoacyl-tRNA.EF-Tu.GTP complex up to the GTP hydrolysis stage on the ribosome. The polypeptide is Elongation factor Ts (Bacteroides fragilis (strain ATCC 25285 / DSM 2151 / CCUG 4856 / JCM 11019 / LMG 10263 / NCTC 9343 / Onslow / VPI 2553 / EN-2)).